Consider the following 115-residue polypeptide: Nucleoid-associated protein LA_4332 (115 aa).

The protein belongs to the YbaB/EbfC family. In terms of assembly, homodimer.

Its subcellular location is the cytoplasm. It localises to the nucleoid. Functionally, binds to DNA and alters its conformation. May be involved in regulation of gene expression, nucleoid organization and DNA protection. The protein is Nucleoid-associated protein LA_4332 of Leptospira interrogans serogroup Icterohaemorrhagiae serovar Lai (strain 56601).